A 318-amino-acid chain; its full sequence is 2-keto-3-deoxygluconate permease (318 aa).

10 helical membrane-spanning segments follow: residues 10 to 30 (LPGG…TLWP), 42 to 62 (GLIS…GATI), 82 to 102 (IAVA…GGVS), 109 to 129 (LSVL…YAAL), 139 to 159 (AGAV…LILG), 163 to 183 (LASF…LGFA), 201 to 221 (TLVP…TIAH), 224 to 244 (TSGV…LLLA), 257 to 277 (VAAS…AGMA), and 289 to 309 (ALVA…TALY).

It belongs to the KdgT transporter family.

Its subcellular location is the cell inner membrane. The enzyme catalyses 2-dehydro-3-deoxy-D-gluconate(in) + H(+)(in) = 2-dehydro-3-deoxy-D-gluconate(out) + H(+)(out). Its function is as follows. Catalyzes the proton-dependent uptake of 2-keto-3-deoxygluconate (KDG) into the cell. This chain is 2-keto-3-deoxygluconate permease, found in Xanthomonas axonopodis pv. citri (strain 306).